The chain runs to 502 residues: ATP synthase subunit alpha (502 aa).

Residues 114 to 139 are disordered; sequence PIDGRGPIETSKTRPIESPAPGVMDR. Residue 169 to 176 participates in ATP binding; it reads GDRQTGKT.

It belongs to the ATPase alpha/beta chains family. In terms of assembly, F-type ATPases have 2 components, CF(1) - the catalytic core - and CF(0) - the membrane proton channel. CF(1) has five subunits: alpha(3), beta(3), gamma(1), delta(1), epsilon(1). CF(0) has three main subunits: a(1), b(2) and c(9-12). The alpha and beta chains form an alternating ring which encloses part of the gamma chain. CF(1) is attached to CF(0) by a central stalk formed by the gamma and epsilon chains, while a peripheral stalk is formed by the delta and b chains.

Its subcellular location is the cell membrane. It carries out the reaction ATP + H2O + 4 H(+)(in) = ADP + phosphate + 5 H(+)(out). Its function is as follows. Produces ATP from ADP in the presence of a proton gradient across the membrane. The alpha chain is a regulatory subunit. The polypeptide is ATP synthase subunit alpha (Halalkalibacterium halodurans (strain ATCC BAA-125 / DSM 18197 / FERM 7344 / JCM 9153 / C-125) (Bacillus halodurans)).